Here is a 560-residue protein sequence, read N- to C-terminus: DNA ligase B (560 aa).

Lys-124 serves as the catalytic N6-AMP-lysine intermediate.

It belongs to the NAD-dependent DNA ligase family. LigB subfamily.

It catalyses the reaction NAD(+) + (deoxyribonucleotide)n-3'-hydroxyl + 5'-phospho-(deoxyribonucleotide)m = (deoxyribonucleotide)n+m + AMP + beta-nicotinamide D-nucleotide.. In terms of biological role, catalyzes the formation of phosphodiester linkages between 5'-phosphoryl and 3'-hydroxyl groups in double-stranded DNA using NAD as a coenzyme and as the energy source for the reaction. The chain is DNA ligase B from Escherichia coli (strain ATCC 8739 / DSM 1576 / NBRC 3972 / NCIMB 8545 / WDCM 00012 / Crooks).